The following is a 158-amino-acid chain: NAD(P)H-quinone oxidoreductase subunit J, chloroplastic (158 aa).

The protein belongs to the complex I 30 kDa subunit family. In terms of assembly, NDH is composed of at least 16 different subunits, 5 of which are encoded in the nucleus.

The protein localises to the plastid. It is found in the chloroplast thylakoid membrane. It carries out the reaction a plastoquinone + NADH + (n+1) H(+)(in) = a plastoquinol + NAD(+) + n H(+)(out). The enzyme catalyses a plastoquinone + NADPH + (n+1) H(+)(in) = a plastoquinol + NADP(+) + n H(+)(out). In terms of biological role, NDH shuttles electrons from NAD(P)H:plastoquinone, via FMN and iron-sulfur (Fe-S) centers, to quinones in the photosynthetic chain and possibly in a chloroplast respiratory chain. The immediate electron acceptor for the enzyme in this species is believed to be plastoquinone. Couples the redox reaction to proton translocation, and thus conserves the redox energy in a proton gradient. The sequence is that of NAD(P)H-quinone oxidoreductase subunit J, chloroplastic from Eucalyptus globulus subsp. globulus (Tasmanian blue gum).